Consider the following 435-residue polypeptide: Glutamine synthetase (435 aa).

The 83-residue stretch at 12–94 (KSIKYFMISY…VAADCVMDDR (83 aa)) folds into the GS beta-grasp domain. Residues 100–435 (PRVVLKRLVA…QWERDSTLDI (336 aa)) form the GS catalytic domain. Mg(2+) contacts are provided by Glu123, Glu125, Glu180, and Glu187. Gly232 is a binding site for L-glutamate. His236 serves as a coordination point for Mg(2+). Ser240 provides a ligand contact to ATP. Residues Arg291 and Arg315 each coordinate L-glutamate. The ATP site is built by Arg315 and Arg320. Residue Glu328 participates in Mg(2+) binding. Arg330 lines the L-glutamate pocket.

Belongs to the glutamine synthetase family. As to quaternary structure, homooctamer. Mg(2+) is required as a cofactor.

It catalyses the reaction L-glutamate + NH4(+) + ATP = L-glutamine + ADP + phosphate + H(+). In terms of biological role, catalyzes the ATP-dependent biosynthesis of glutamine from glutamate and ammonia. This is Glutamine synthetase from Rhizobium leguminosarum bv. phaseoli.